We begin with the raw amino-acid sequence, 38 residues long: Spheniscin-2 (38 aa).

Cystine bridges form between cysteine 5/cysteine 33, cysteine 12/cysteine 27, and cysteine 17/cysteine 34.

As to quaternary structure, monomer. As to expression, secreted into the stomach cavity.

Its subcellular location is the secreted. Functionally, has antifungal activity and antibacterial activity against Gram-positive and Gram-negative bacteria. Involved in the process of food preservation in the stomach during the incubation fast. May also be present during infection. In Aptenodytes patagonicus (King penguin), this protein is Spheniscin-2.